The primary structure comprises 440 residues: Chromosome partition protein MukF (440 aa).

The interval 208–236 (LSETSGTLRELQDTLEAAGDKLQANLLRI) is leucine-zipper.

The protein belongs to the MukF family. As to quaternary structure, interacts, and probably forms a ternary complex, with MukE and MukB via its C-terminal region. The complex formation is stimulated by calcium or magnesium. It is required for an interaction between MukE and MukB.

Its subcellular location is the cytoplasm. It localises to the nucleoid. Functionally, involved in chromosome condensation, segregation and cell cycle progression. May participate in facilitating chromosome segregation by condensation DNA from both sides of a centrally located replisome during cell division. Not required for mini-F plasmid partitioning. Probably acts via its interaction with MukB and MukE. Overexpression results in anucleate cells. It has a calcium binding activity. The protein is Chromosome partition protein MukF of Escherichia coli O127:H6 (strain E2348/69 / EPEC).